Consider the following 361-residue polypeptide: Phospho-N-acetylmuramoyl-pentapeptide-transferase (361 aa).

The next 10 membrane-spanning stretches (helical) occupy residues 26-46, 71-91, 97-117, 134-154, 168-188, 200-220, 236-256, 264-284, 290-310, and 338-358; these read AGGA…CIIE, TPTM…FLWA, FILW…CDDY, IFGQ…FPSN, GFFI…IVGS, GLAI…AYFA, GAGE…GFLW, IFMG…VSLF, VLVL…IQIF, and KVTV…FASL.

This sequence belongs to the glycosyltransferase 4 family. MraY subfamily. It depends on Mg(2+) as a cofactor.

It localises to the cell membrane. The enzyme catalyses UDP-N-acetyl-alpha-D-muramoyl-L-alanyl-gamma-D-glutamyl-meso-2,6-diaminopimeloyl-D-alanyl-D-alanine + di-trans,octa-cis-undecaprenyl phosphate = di-trans,octa-cis-undecaprenyl diphospho-N-acetyl-alpha-D-muramoyl-L-alanyl-D-glutamyl-meso-2,6-diaminopimeloyl-D-alanyl-D-alanine + UMP. It participates in cell wall biogenesis; peptidoglycan biosynthesis. In terms of biological role, catalyzes the initial step of the lipid cycle reactions in the biosynthesis of the cell wall peptidoglycan: transfers peptidoglycan precursor phospho-MurNAc-pentapeptide from UDP-MurNAc-pentapeptide onto the lipid carrier undecaprenyl phosphate, yielding undecaprenyl-pyrophosphoryl-MurNAc-pentapeptide, known as lipid I. The polypeptide is Phospho-N-acetylmuramoyl-pentapeptide-transferase (Endomicrobium trichonymphae).